We begin with the raw amino-acid sequence, 480 residues long: 3-isopropylmalate dehydratase large subunit (480 aa).

The [4Fe-4S] cluster site is built by Cys360, Cys418, and Cys421.

Belongs to the aconitase/IPM isomerase family. LeuC type 1 subfamily. Heterodimer of LeuC and LeuD. The cofactor is [4Fe-4S] cluster.

The catalysed reaction is (2R,3S)-3-isopropylmalate = (2S)-2-isopropylmalate. Its pathway is amino-acid biosynthesis; L-leucine biosynthesis; L-leucine from 3-methyl-2-oxobutanoate: step 2/4. Its function is as follows. Catalyzes the isomerization between 2-isopropylmalate and 3-isopropylmalate, via the formation of 2-isopropylmaleate. The polypeptide is 3-isopropylmalate dehydratase large subunit (Anaeromyxobacter dehalogenans (strain 2CP-1 / ATCC BAA-258)).